Reading from the N-terminus, the 526-residue chain is MAISLATKAATDALKVNRAPVGVEPQEVHKWLQSFNWDFKENRTKYPTKYHMANETKEQFKVIAKEYARMEAAKDERQFGTLLDGLTRLGAGNKVHPRWGETMKVISNFLEVGEYNAIAASAMLWDSATAAEQKNGYLAQVLDEIRHTHQCAFINHYYSKHYHDPAGHNDARRTRAIGPLWKGMKRVFADGFISGDAVECSVNLQLVGEACFTNPLIVAVTEWASANGDEITPTVFLSVETDELRHMANGYQTVVSIANDPASAKFLNTDLNNAFWTQQKYFTPVLGYLFEYGSKFKVEPWVKTWNRWVYEDWGGIWIGRLGKYGVESPASLRDAKRDAYWAHHDLALAAYAMWPLGFARLALPDEEDQAWFEANYPGWADHYGKIFNEWKKLGYEDPKSGFIPYQWLLANGHDVYIDRVSQVPFIPSLAKGTGSLRVHEFNGKKHSLTDDWGERQWLIEPERYECHNVFEQYEGRELSEVIAEGHGVRSDGKTLIAQPHTRGDNLWTLEDIKRAGCVFPDPLAKF.

Fe cation is bound by residues Glu114, Glu144, and His147. The active site involves Cys151. Fe cation contacts are provided by Glu209, Glu243, and His246.

Belongs to the TmoA/XamoA family. In terms of assembly, m.trichosporium has two forms of methane monooxygenase, a soluble and a membrane-bound type. The soluble type consists of four components (A to D): protein A, comprising three chains, in an alpha-2, beta-2, gamma-2 configuration, is a nonheme iron protein containing an unusual mu-hydroxo bridge structure at its active site and interacts with both oxygen and methane. Requires Fe cation as cofactor.

It carries out the reaction methane + NADH + O2 + H(+) = methanol + NAD(+) + H2O. The catalysed reaction is methane + NADPH + O2 + H(+) = methanol + NADP(+) + H2O. Functionally, responsible for the initial oxygenation of methane to methanol in methanotrophs. It also catalyzes the monohydroxylation of a variety of unactivated alkenes, alicyclic, aromatic and heterocyclic compounds. The polypeptide is Methane monooxygenase component A alpha chain (mmoX) (Methylosinus trichosporium).